The chain runs to 213 residues: NADH-quinone oxidoreductase subunit I (213 aa).

4Fe-4S ferredoxin-type domains lie at 74–103 and 113–142; these read RFIE…METS and ENYS…HGTE. 8 residues coordinate [4Fe-4S] cluster: C83, C86, C89, C93, C122, C125, C128, and C132.

The protein belongs to the complex I 23 kDa subunit family. In terms of assembly, NDH-1 is composed of 14 different subunits. Subunits NuoA, H, J, K, L, M, N constitute the membrane sector of the complex. [4Fe-4S] cluster serves as cofactor.

Its subcellular location is the cell inner membrane. It carries out the reaction a quinone + NADH + 5 H(+)(in) = a quinol + NAD(+) + 4 H(+)(out). NDH-1 shuttles electrons from NADH, via FMN and iron-sulfur (Fe-S) centers, to quinones in the respiratory chain. The immediate electron acceptor for the enzyme in this species is believed to be ubiquinone. Couples the redox reaction to proton translocation (for every two electrons transferred, four hydrogen ions are translocated across the cytoplasmic membrane), and thus conserves the redox energy in a proton gradient. In Campylobacter jejuni subsp. jejuni serotype O:23/36 (strain 81-176), this protein is NADH-quinone oxidoreductase subunit I.